Reading from the N-terminus, the 360-residue chain is Heat-inducible transcription repressor HrcA (360 aa).

It belongs to the HrcA family.

Its function is as follows. Negative regulator of class I heat shock genes (grpE-dnaK-dnaJ and groELS operons). Prevents heat-shock induction of these operons. In Gloeobacter violaceus (strain ATCC 29082 / PCC 7421), this protein is Heat-inducible transcription repressor HrcA.